The primary structure comprises 406 residues: Dihydroorotase, mitochondrial (406 aa).

The N-terminal 41 residues, 1–41, are a transit peptide targeting the mitochondrion; sequence MQTAATSTFFANPHVKHLPGPFLRPSPHYGALVHLPSFRNK. Residues His69, His71, Lys155, His193, His231, and Asp305 each coordinate Zn(2+). At Lys155 the chain carries N6-carboxylysine.

It belongs to the metallo-dependent hydrolases superfamily. DHOase family. Class II DHOase subfamily. Zn(2+) serves as cofactor.

The protein localises to the mitochondrion. It catalyses the reaction (S)-dihydroorotate + H2O = N-carbamoyl-L-aspartate + H(+). Its pathway is pyrimidine metabolism; UMP biosynthesis via de novo pathway; (S)-dihydroorotate from bicarbonate: step 3/3. The chain is Dihydroorotase, mitochondrial (PYRC) from Oryza sativa subsp. japonica (Rice).